The primary structure comprises 292 residues: Ribosome-inactivating protein saporin-2 (292 aa).

An N-terminal signal peptide occupies residues 1 to 24 (MKIYVVATIAWILLQFSAWTTTDA). The active site involves glutamate 200.

It belongs to the ribosome-inactivating protein family. Type 1 RIP subfamily.

It catalyses the reaction Endohydrolysis of the N-glycosidic bond at one specific adenosine on the 28S rRNA.. Ribosome-inactivating protein of type 1, inhibits protein synthesis in animal cells. Useful as immunotoxin for pharmacological applications. In Saponaria officinalis (Common soapwort), this protein is Ribosome-inactivating protein saporin-2 (SAP2).